The following is a 182-amino-acid chain: Adenine phosphoribosyltransferase (182 aa).

The protein belongs to the purine/pyrimidine phosphoribosyltransferase family. In terms of assembly, homodimer.

The protein localises to the cytoplasm. It carries out the reaction AMP + diphosphate = 5-phospho-alpha-D-ribose 1-diphosphate + adenine. It functions in the pathway purine metabolism; AMP biosynthesis via salvage pathway; AMP from adenine: step 1/1. In terms of biological role, catalyzes a salvage reaction resulting in the formation of AMP, that is energically less costly than de novo synthesis. This chain is Adenine phosphoribosyltransferase, found in Sulfurimonas denitrificans (strain ATCC 33889 / DSM 1251) (Thiomicrospira denitrificans (strain ATCC 33889 / DSM 1251)).